We begin with the raw amino-acid sequence, 150 residues long: Galectin-2 (150 aa).

One can recognise a Galectin domain in the interval 9-141 (NQVKLQNDFK…FSSPVTVDVH (133 aa)). A carbohydrate-binding residues include His51, Arg55, Asn64, Glu75, and Arg77.

In terms of assembly, homotetramer. Oligomerization is required for carbohydrate binding.

It localises to the secreted. Its subcellular location is the extracellular space. The protein resides in the extracellular matrix. It is found in the cell wall. The protein localises to the endomembrane system. Its function is as follows. Binds lactose. May play a role in fruiting body formation. Displays toxicity towards the nematode C.elegans by binding to a specific Gal-beta-1,4-Fuc-alpha-1,6 modification of N-glycan cores on C.elegans intestinal cells. This Coprinopsis cinerea (Inky cap fungus) protein is Galectin-2 (Cgl2).